The following is a 159-amino-acid chain: Ribosomal RNA large subunit methyltransferase H (159 aa).

Residues leucine 76, glycine 108, and phenylalanine 127 to leucine 132 contribute to the S-adenosyl-L-methionine site.

The protein belongs to the RNA methyltransferase RlmH family. As to quaternary structure, homodimer.

It is found in the cytoplasm. It carries out the reaction pseudouridine(1915) in 23S rRNA + S-adenosyl-L-methionine = N(3)-methylpseudouridine(1915) in 23S rRNA + S-adenosyl-L-homocysteine + H(+). Its function is as follows. Specifically methylates the pseudouridine at position 1915 (m3Psi1915) in 23S rRNA. This Bacillus mycoides (strain KBAB4) (Bacillus weihenstephanensis) protein is Ribosomal RNA large subunit methyltransferase H.